Consider the following 405-residue polypeptide: Argininosuccinate synthase (405 aa).

11-19 (AYSGGLDTS) is a binding site for ATP. Y90 is an L-citrulline binding site. G119 contacts ATP. L-aspartate is bound by residues T121, N125, and D126. N125 contributes to the L-citrulline binding site. L-citrulline is bound by residues R129, S178, S187, E263, and Y275.

Belongs to the argininosuccinate synthase family. Type 1 subfamily. As to quaternary structure, homotetramer.

The protein resides in the cytoplasm. The catalysed reaction is L-citrulline + L-aspartate + ATP = 2-(N(omega)-L-arginino)succinate + AMP + diphosphate + H(+). It participates in amino-acid biosynthesis; L-arginine biosynthesis; L-arginine from L-ornithine and carbamoyl phosphate: step 2/3. This is Argininosuccinate synthase from Legionella pneumophila (strain Paris).